The chain runs to 608 residues: Chaperone protein HtpG (608 aa).

Residues 1 to 332 are a; substrate-binding; that stretch reads MQFQTEVNQL…VEDLPLNVSR (332 aa). The tract at residues 333 to 536 is b; sequence EILQENQILK…KNKPDFAMQQ (204 aa). The interval 537–608 is c; sequence LLKQMGQEQN…LTKIINKAFS (72 aa).

The protein belongs to the heat shock protein 90 family. Homodimer.

The protein resides in the cytoplasm. Its function is as follows. Molecular chaperone. Has ATPase activity. This Campylobacter jejuni (strain RM1221) protein is Chaperone protein HtpG.